Reading from the N-terminus, the 319-residue chain is D-galacturonate reductase (319 aa).

Catalysis depends on Tyr58, which acts as the Proton donor. His121 is a binding site for substrate. 216-275 contacts NADP(+); the sequence is SPLGAARTKWGDDRVLGSDIIEEIAQAKGKSTAQISLRWVYEQGVSIVTKSYNKERMRQN.

Belongs to the aldo/keto reductase family. In terms of tissue distribution, expressed specifically in the receptacle tissue of the fruit.

The catalysed reaction is L-galactonate + NADP(+) = aldehydo-D-galacturonate + NADPH + H(+). It participates in cofactor biosynthesis; L-ascorbate biosynthesis. In terms of biological role, involved in ascorbic acid (vitamin C) biosynthesis. This is D-galacturonate reductase (GALUR) from Fragaria ananassa (Strawberry).